The following is a 467-amino-acid chain: tRNA-2-methylthio-N(6)-dimethylallyladenosine synthase (467 aa).

The MTTase N-terminal domain occupies 22–138 (GSYWITTFGC…LETLLNKVET (117 aa)). Residues C31, C67, C101, C173, C177, and C180 each contribute to the [4Fe-4S] cluster site. The 238-residue stretch at 159–396 (RDSSICAWVN…NSLVEIKAKE (238 aa)) folds into the Radical SAM core domain. Residues 399-467 (VRYKDRVEEV…AFSLSGVIEN (69 aa)) enclose the TRAM domain.

Belongs to the methylthiotransferase family. MiaB subfamily. As to quaternary structure, monomer. The cofactor is [4Fe-4S] cluster.

The protein localises to the cytoplasm. The enzyme catalyses N(6)-dimethylallyladenosine(37) in tRNA + (sulfur carrier)-SH + AH2 + 2 S-adenosyl-L-methionine = 2-methylsulfanyl-N(6)-dimethylallyladenosine(37) in tRNA + (sulfur carrier)-H + 5'-deoxyadenosine + L-methionine + A + S-adenosyl-L-homocysteine + 2 H(+). Functionally, catalyzes the methylthiolation of N6-(dimethylallyl)adenosine (i(6)A), leading to the formation of 2-methylthio-N6-(dimethylallyl)adenosine (ms(2)i(6)A) at position 37 in tRNAs that read codons beginning with uridine. This chain is tRNA-2-methylthio-N(6)-dimethylallyladenosine synthase, found in Prochlorococcus marinus (strain MIT 9211).